The sequence spans 262 residues: Apolipoprotein A-I-1 (262 aa).

Positions 1 to 18 are cleaved as a signal peptide; the sequence is MKFLALALTILLAAGTQA. Residues 32–63 are 3 X approximate tandem repeats; it reads VKAALSMYIAQVKLTAQRSIDLLDDTEYKEYK. 2 repeat units span residues 64–85 and 87–107. Residues 64–262 form a 10 X approximate tandem repeats region; the sequence is MQLTQSLDNL…YETISQAMKA (199 aa). A 3; half-length repeat occupies 108-118; it reads KDVEELRSQLE. A run of 5 repeats spans residues 119–140, 141–162, 163–184, 185–206, and 207–228. The 9; half-length repeat unit spans residues 229–239; that stretch reads PLSEDFKGQVG. Repeat unit 10 spans residues 240–262; that stretch reads PAAEQAKQKLLAFYETISQAMKA.

It belongs to the apolipoprotein A1/A4/E family.

It is found in the secreted. In terms of biological role, participates in the reverse transport of cholesterol from tissues to the liver for excretion by promoting cholesterol efflux from tissues and by acting as a cofactor for the lecithin cholesterol acyltransferase (LCAT). In Oncorhynchus mykiss (Rainbow trout), this protein is Apolipoprotein A-I-1.